The following is an 88-amino-acid chain: Small ribosomal subunit protein bS20 (88 aa).

A disordered region spans residues 1–20 (MANIKQQKKRNKTNEKRRLR).

It belongs to the bacterial ribosomal protein bS20 family.

In terms of biological role, binds directly to 16S ribosomal RNA. The protein is Small ribosomal subunit protein bS20 of Phytoplasma australiense.